The chain runs to 300 residues: Tyrosine recombinase XerC (300 aa).

The Core-binding (CB) domain occupies 2-88; that stretch reads TQEGQLEKRF…SLRSFYTFLL (87 aa). A Tyr recombinase domain is found at 109–294; that stretch reads RLPKFFYSEE…TKEHLKSTYM (186 aa). Residues arginine 150, lysine 174, histidine 246, arginine 249, and histidine 272 contribute to the active site. Catalysis depends on tyrosine 281, which acts as the O-(3'-phospho-DNA)-tyrosine intermediate.

Belongs to the 'phage' integrase family. XerC subfamily. As to quaternary structure, forms a cyclic heterotetrameric complex composed of two molecules of XerC and two molecules of XerD.

The protein localises to the cytoplasm. In terms of biological role, site-specific tyrosine recombinase, which acts by catalyzing the cutting and rejoining of the recombining DNA molecules. The XerC-XerD complex is essential to convert dimers of the bacterial chromosome into monomers to permit their segregation at cell division. It also contributes to the segregational stability of plasmids. This Listeria innocua serovar 6a (strain ATCC BAA-680 / CLIP 11262) protein is Tyrosine recombinase XerC.